Consider the following 308-residue polypeptide: Probable inositol oxygenase (308 aa).

Residues arginine 49 and 106–108 (DDS) each bind substrate. Fe cation contacts are provided by histidine 119, histidine 144, and aspartate 145. Residues lysine 148 and 165–166 (GD) contribute to the substrate site. 3 residues coordinate Fe cation: histidine 217, histidine 243, and aspartate 276. Substrate is bound at residue 243–244 (HS).

The protein belongs to the myo-inositol oxygenase family. Fe cation serves as cofactor.

The protein localises to the cytoplasm. The catalysed reaction is myo-inositol + O2 = D-glucuronate + H2O + H(+). The protein operates within polyol metabolism; myo-inositol degradation into D-glucuronate; D-glucuronate from myo-inositol: step 1/1. In terms of biological role, involved in the biosynthesis of UDP-glucuronic acid (UDP-GlcA), providing nucleotide sugars for cell-wall polymers. May be also involved in plant ascorbate biosynthesis. This chain is Probable inositol oxygenase, found in Oryza sativa subsp. japonica (Rice).